The chain runs to 451 residues: MLSKTHIMFIPFPAQGHMSPMMQFAKRLAWKGVRITIVLPAQIRDSMQITNSLINTECISFDFDKDDGMPYSMQAYMGVVKLKVTNKLSDLLEKQKTNGYPVNLLVVDSLYPSRVEMCHQLGVKGAPFFTHSCAVGAIYYNAHLGKLKIPPEEGLTSVSLPSIPLLGRDDLPIIRTGTFPDLFEHLGNQFSDLDKADWIFFNTFDKLENEEAKWLSSQWPITSIGPLIPSMYLDKQLPNDKGNGINLYKADVGSCIKWLDAKDPGSVVYASFGSVKHNFGDDYMDEVAWGLLHSKYNFIWVVIEPERTKLSSDFLAEAEEKGLIVSWCPQLEVLSHKSIGSFMTHCGWNSTVEALSLGVPMVAVPQQFDQPVNAKYIVDVWQIGVRVPIGEDGVVLRGEVANCIKDVMEGEIGDELRGNALKWKGLAVEAMEKGGSSDKNIDEFISKLVSS.

The active-site Proton acceptor is His17. His17 contributes to the an anthocyanidin binding site. Asp108 serves as the catalytic Charge relay. Residues Thr130, Gln330, His345, Trp348, Asn349, Ser350, Glu353, Asp369, and Gln370 each contribute to the UDP-alpha-D-glucose site.

Belongs to the UDP-glycosyltransferase family. Expressed at higher levels in roots than in leaves.

The catalysed reaction is (20S)-ginsenoside C-K + UDP-alpha-D-glucose = (20S)-ginsenoside F2 + UDP + H(+). The enzyme catalyses (20S)-protopanaxadiol + UDP-alpha-D-glucose = (20S)-ginsenoside Rh2 + UDP + H(+). Its pathway is secondary metabolite biosynthesis; terpenoid biosynthesis. In terms of biological role, component of the dammarane-type triterpene saponins (e.g. PPD-type ginsenosides or panaxosides) biosynthetic pathway. Glycosyltransferase that catalyzes the biosynthesis of ginsenoside Rh2 from protopanaxadiol (PPD) and the conversion of compound K to ginsenoside F2. This chain is UDP-glucosyltransferase 74AE2, found in Panax ginseng (Korean ginseng).